Here is a 168-residue protein sequence, read N- to C-terminus: MSLACLRSFFLPALLASTAVLVASFHLESVVGLVPCALCFSQRLMLGVYALVCLAALVHSPAARGRRAYAGLALASAFGGALLAGRHVWLQGDPQVVDGCHLPVEQVLQRPLGEILQMFLLGSPDCVSISWSFLDLTLPEWSLLAFLLLAAMPLSWLVAYRFRKRAMA.

The Cytoplasmic segment spans residues 1–9 (MSLACLRSF). A helical transmembrane segment spans residues 10-26 (FLPALLASTAVLVASFH). Residues 27 to 44 (LESVVGLVPCALCFSQRL) are Periplasmic-facing. A disulfide bond links Cys-36 and Cys-39. A helical membrane pass occupies residues 45 to 61 (MLGVYALVCLAALVHSP). At 62–67 (AARGRR) the chain is on the cytoplasmic side. A helical transmembrane segment spans residues 68-85 (AYAGLALASAFGGALLAG). Residues 86 to 140 (RHVWLQGDPQVVDGCHLPVEQVLQRPLGEILQMFLLGSPDCVSISWSFLDLTLPE) lie on the Periplasmic side of the membrane. Cysteines 100 and 126 form a disulfide. Residues 141 to 159 (WSLLAFLLLAAMPLSWLVA) traverse the membrane as a helical segment. Over 160-168 (YRFRKRAMA) the chain is Cytoplasmic.

The protein belongs to the DsbB family.

It is found in the cell inner membrane. Functionally, required for disulfide bond formation in some periplasmic proteins. Acts by oxidizing the DsbA protein. The chain is Disulfide bond formation protein B 2 from Pseudomonas entomophila (strain L48).